Reading from the N-terminus, the 391-residue chain is Probable malate dehydrogenase 1 (391 aa).

68–74 (GAAGQIA) contacts NAD(+). 2 residues coordinate substrate: arginine 149 and arginine 155. Residues asparagine 162, glutamine 169, and 186 to 188 (VGN) each bind NAD(+). Substrate-binding residues include asparagine 188 and arginine 219. Histidine 244 acts as the Proton acceptor in catalysis.

Belongs to the LDH/MDH superfamily. MDH type 2 family. Homodimer.

It catalyses the reaction (S)-malate + NAD(+) = oxaloacetate + NADH + H(+). In terms of biological role, catalyzes the reversible oxidation of malate to oxaloacetate. The protein is Probable malate dehydrogenase 1 (mdhA) of Dictyostelium discoideum (Social amoeba).